Reading from the N-terminus, the 247-residue chain is PABIR family member 2 (247 aa).

The interval 1-23 (MAQEKMELDLEPDTSYGGTLRRS) is disordered. At Ala-2 the chain carries N-acetylalanine. Phosphoserine is present on residues Ser-25, Ser-33, Ser-50, Ser-58, and Leu-63. The interval 82 to 104 (ISQSWDESLSLSDSDFDKPEKLY) is disordered. Positions 83–94 (SQSWDESLSLSD) are enriched in low complexity. Thr-112 carries the post-translational modification Phosphothreonine. Phosphoserine occurs at positions 115 and 119. Arg-122 is subject to Omega-N-methylarginine. Disordered stretches follow at residues 129–152 (VSSSGLPPSPVPSPRRFSRRSQSP), 158–177 (PSVLGPLKRKGEMETESQPK), and 202–230 (DILDGSSSSSGLSSDPLAKGSATAESPVA). Residues Ser-137 and Ser-141 each carry the phosphoserine modification. Over residues 166–176 (RKGEMETESQP) the composition is skewed to basic and acidic residues. A compositionally biased stretch (low complexity) spans 202-216 (DILDGSSSSSGLSSD).

The protein belongs to the FAM122 family. In terms of processing, isoform 3 and isoform 4 are phosphorylated on Ser-62 and Ser-64.

This chain is PABIR family member 2, found in Homo sapiens (Human).